Here is a 379-residue protein sequence, read N- to C-terminus: L-lactate dehydrogenase (379 aa).

An FMN hydroxy acid dehydrogenase domain is found at 1 to 379 (MIISASTDYR…IGRDSLVSLP (379 aa)). Tyr-24 is a substrate binding site. 2 residues coordinate FMN: Ser-106 and Gln-127. Tyr-129 serves as a coordination point for substrate. FMN is bound at residue Thr-155. Position 164 (Arg-164) interacts with substrate. FMN is bound at residue Lys-251. Residue His-275 is the Proton acceptor of the active site. Arg-278 is a binding site for substrate. FMN is bound at residue 306–330 (DSGIRTGLDVVRMLALGADTVLLGR).

It belongs to the FMN-dependent alpha-hydroxy acid dehydrogenase family. The cofactor is FMN.

It is found in the cell inner membrane. The enzyme catalyses (S)-lactate + A = pyruvate + AH2. In terms of biological role, catalyzes the conversion of L-lactate to pyruvate. Is coupled to the respiratory chain. This is L-lactate dehydrogenase from Stenotrophomonas maltophilia (strain K279a).